A 386-amino-acid polypeptide reads, in one-letter code: O-methyltransferase 10 (386 aa).

Positions 207, 231, 254, 274, and 288 each coordinate S-adenosyl-L-homocysteine. Asp254 is an S-adenosyl-L-methionine binding site. Residue His292 is the Proton acceptor of the active site.

Belongs to the class I-like SAM-binding methyltransferase superfamily. Cation-independent O-methyltransferase family. In terms of assembly, homodimer.

The catalysed reaction is dopamine + S-adenosyl-L-methionine = 4-methoxytyramine + S-adenosyl-L-homocysteine + H(+). It catalyses the reaction 3,4-dihydroxy-5-methoxyphenethylamine + S-adenosyl-L-methionine = 3-hydroxy-4,5-dimethoxyphenethylamine + S-adenosyl-L-homocysteine + H(+). It carries out the reaction 3-hydroxy-4,5-dimethoxyphenethylamine + S-adenosyl-L-methionine = mescaline + S-adenosyl-L-homocysteine + H(+). The enzyme catalyses 4-hydroxy-3,5-dimethoxyphenethylamine + S-adenosyl-L-methionine = mescaline + S-adenosyl-L-homocysteine + H(+). Its pathway is aromatic compound metabolism. It functions in the pathway alkaloid biosynthesis. Its function is as follows. O-methyltransferase participating in the biosynthesis of natural products derived from phenylethylamine, including mescaline, a natural hallucinogen potentially used in psychotherapeutic treatments. Catalyzes the O-methylation of mescaline para hydroxyl groups, using dopamine, 3,4-dihydroxy-5-methoxyphenethylamine, 3-hydroxy-4,5-dimethoxyphenethylamine and 4-hydroxy-3,5-dimethoxyphenethylamine as substrates. This chain is O-methyltransferase 10, found in Lophophora williamsii (Peyote).